Here is a 361-residue protein sequence, read N- to C-terminus: Chorismate synthase (361 aa).

Arginine 48 and arginine 54 together coordinate NADP(+). Residues 125–127 (RSS), 238–239 (NA), glycine 278, 293–297 (KPTSS), and arginine 319 each bind FMN.

The protein belongs to the chorismate synthase family. As to quaternary structure, homotetramer. FMNH2 serves as cofactor.

It catalyses the reaction 5-O-(1-carboxyvinyl)-3-phosphoshikimate = chorismate + phosphate. It participates in metabolic intermediate biosynthesis; chorismate biosynthesis; chorismate from D-erythrose 4-phosphate and phosphoenolpyruvate: step 7/7. Functionally, catalyzes the anti-1,4-elimination of the C-3 phosphate and the C-6 proR hydrogen from 5-enolpyruvylshikimate-3-phosphate (EPSP) to yield chorismate, which is the branch point compound that serves as the starting substrate for the three terminal pathways of aromatic amino acid biosynthesis. This reaction introduces a second double bond into the aromatic ring system. This chain is Chorismate synthase, found in Vibrio cholerae serotype O1 (strain ATCC 39541 / Classical Ogawa 395 / O395).